Here is a 493-residue protein sequence, read N- to C-terminus: 3-octaprenyl-4-hydroxybenzoate carboxy-lyase (493 aa).

N172 serves as a coordination point for Mn(2+). Prenylated FMN contacts are provided by residues 175–177 (IYR), 189–191 (RWL), and 194–195 (RG). E238 contributes to the Mn(2+) binding site. The Proton donor role is filled by D287.

This sequence belongs to the UbiD family. As to quaternary structure, homohexamer. It depends on prenylated FMN as a cofactor. Mn(2+) is required as a cofactor.

The protein localises to the cell membrane. It catalyses the reaction a 4-hydroxy-3-(all-trans-polyprenyl)benzoate + H(+) = a 2-(all-trans-polyprenyl)phenol + CO2. Its pathway is cofactor biosynthesis; ubiquinone biosynthesis. Its function is as follows. Catalyzes the decarboxylation of 3-octaprenyl-4-hydroxy benzoate to 2-octaprenylphenol, an intermediate step in ubiquinone biosynthesis. The sequence is that of 3-octaprenyl-4-hydroxybenzoate carboxy-lyase from Shewanella woodyi (strain ATCC 51908 / MS32).